A 1290-amino-acid polypeptide reads, in one-letter code: 1-phosphatidylinositol 4,5-bisphosphate phosphodiesterase gamma-1 (1290 aa).

An N-acetylalanine modification is found at alanine 2. The 116-residue stretch at 27 to 142 (RSLEVGTVMT…WIKGLTWLME (116 aa)) folds into the PH 1 domain. One can recognise an EF-hand domain in the interval 152-187 (QIERWLRKQFYSVDRNREDRISAKDLKNMLSQVNYR). Ca(2+)-binding residues include aspartate 165, asparagine 167, glutamate 169, arginine 171, and aspartate 176. Positions 320-464 (ETMNNPLSHY…LKRKILIKHK (145 aa)) constitute a PI-PLC X-box domain. Residues histidine 335 and histidine 380 contribute to the active site. Residues 489 to 523 (SIKNGILYLEDPVNHEWYPHYFVLTSSKIYYSEET) form the PH 2; first part domain. Tyrosine 506 carries the phosphotyrosine modification. The segment at 522–546 (ETSSDQGNEDEEEPKEASGSTELHS) is disordered. 2 consecutive SH2 domains span residues 550 to 657 (WFHG…SEPV) and 668 to 756 (WYHA…RYPI). A Phosphotyrosine; by SYK modification is found at tyrosine 771. Phosphotyrosine is present on tyrosine 775. Tyrosine 783 carries the post-translational modification Phosphotyrosine; by ITK, SYK and TXK. The SH3 domain maps to 791 to 851 (TFKCAVKALF…PSNYVEEMIN (61 aa)). One can recognise a PH 2; second part domain in the interval 895–931 (FVFSISMPSVAQWSLDVAADSQEELQDWVKKIREVAQ). One can recognise a PI-PLC Y-box domain in the interval 953–1070 (LSELVVYCRP…GYVLQPSTMR (118 aa)). Position 977 is a phosphotyrosine (tyrosine 977). One can recognise a C2 domain in the interval 1071-1194 (DEAFDPFDKS…TGYRAVPLKN (124 aa)). 4 positions are modified to phosphoserine: serine 1221, serine 1227, serine 1233, and serine 1248. A Phosphotyrosine modification is found at tyrosine 1253. Serine 1263 carries the phosphoserine modification. The interval 1271–1290 (FDSRERRAPRRTRVNGDNRL) is disordered.

In terms of assembly, interacts with AGAP2 via its SH3 domain. Interacts (via SH2 domain) with RET. Interacts with FLT1 (tyrosine-phosphorylated). Interacts (via SH2 domain) with FGFR1, FGFR2, FGFR3 and FGFR4 (phosphorylated). Interacts with LAT (phosphorylated) upon TCR activation. Interacts (via SH3 domain) with the Pro-rich domain of TNK1. Associates with BLNK, VAV1, GRB2 and NCK1 in a B-cell antigen receptor-dependent fashion. Interacts with CBLB in activated T-cells; which inhibits phosphorylation. Interacts with SHB. Interacts (via SH3 domain) with the Arg/Gly-rich-flanked Pro-rich domains of KHDRBS1/SAM68. This interaction is selectively regulated by arginine methylation of KHDRBS1/SAM68. Interacts with INPP5D/SHIP1, THEMIS and CLNK. Interacts with AXL, FLT4 and KIT. Interacts with RALGPS1. Interacts (via the SH2 domains) with VIL1 (phosphorylated at C-terminus tyrosine phosphorylation sites). Interacts (via SH2 domain) with PDGFRA and PDGFRB (tyrosine phosphorylated). Interacts with PIP5K1C. Interacts with NTRK1 and NTRK2 (phosphorylated upon ligand-binding). Interacts with SYK; activates PLCG1. Interacts with GRB2, LAT and THEMIS upon TCR activation in thymocytes. Interacts with TESPA1; the association is increased with prolonged stimulation of the TCR and may facilitate the assembly of the LAT signalosome. Interacts (via C-terminal proline-rich domain (PRD)) with PLCG1 (via SH3 domain); this interaction leads to guanine nucleotide exchange from PlCG1 to DNM1 and enhances DNM1-dependent endocytosis. Ca(2+) is required as a cofactor. Post-translationally, ubiquitinated by CBLB in activated T-cells. Tyrosine phosphorylated in response to signaling via activated FLT3, KIT and PDGFRA. Tyrosine phosphorylated by activated FGFR1, FGFR2, FGFR3 and FGFR4. Tyrosine phosphorylated by activated FLT1 and KDR. Tyrosine phosphorylated by activated PDGFRB. The receptor-mediated activation of PLCG1 involves its phosphorylation by tyrosine kinases, in response to ligation of a variety of growth factor receptors and immune system receptors. For instance, SYK phosphorylates and activates PLCG1 in response to ligation of the B-cell receptor. May be dephosphorylated by PTPRJ. Phosphorylated by ITK and TXK on Tyr-783 upon TCR activation in T-cells.

It is found in the cell projection. It localises to the lamellipodium. The protein localises to the ruffle. It carries out the reaction a 1,2-diacyl-sn-glycero-3-phospho-(1D-myo-inositol-4,5-bisphosphate) + H2O = 1D-myo-inositol 1,4,5-trisphosphate + a 1,2-diacyl-sn-glycerol + H(+). It catalyses the reaction a 1,2-diacyl-sn-glycero-3-phospho-(1D-myo-inositol) + H2O = 1D-myo-inositol 1-phosphate + a 1,2-diacyl-sn-glycerol + H(+). Activated by phosphorylation on tyrosine residues. Mediates the production of the second messenger molecules diacylglycerol (DAG) and inositol 1,4,5-trisphosphate (IP3). Plays an important role in the regulation of intracellular signaling cascades. Becomes activated in response to ligand-mediated activation of receptor-type tyrosine kinases, such as PDGFRA, PDGFRB, EGFR, FGFR1, FGFR2, FGFR3 and FGFR4. Plays a role in actin reorganization and cell migration. Guanine nucleotide exchange factor that binds the GTPase DNM1 and catalyzes the dissociation of GDP, allowing a GTP molecule to bind in its place, therefore enhancing DNM1-dependent endocytosis. This Rattus norvegicus (Rat) protein is 1-phosphatidylinositol 4,5-bisphosphate phosphodiesterase gamma-1.